Reading from the N-terminus, the 65-residue chain is Photosystem II reaction center protein J (65 aa).

The helical transmembrane segment at 35 to 55 threads the bilayer; it reads LWLVATAGGTAVIFVLGIFFY.

Belongs to the PsbJ family. As to quaternary structure, PSII is composed of 1 copy each of membrane proteins PsbA, PsbB, PsbC, PsbD, PsbE, PsbF, PsbH, PsbI, PsbJ, PsbK, PsbL, PsbM, PsbT, PsbX, PsbY, Psb30/Ycf12, peripheral proteins PsbO, CyanoQ (PsbQ), PsbU, PsbV and a large number of cofactors. It forms dimeric complexes.

The protein localises to the cellular thylakoid membrane. Its function is as follows. One of the components of the core complex of photosystem II (PSII). PSII is a light-driven water:plastoquinone oxidoreductase that uses light energy to abstract electrons from H(2)O, generating O(2) and a proton gradient subsequently used for ATP formation. It consists of a core antenna complex that captures photons, and an electron transfer chain that converts photonic excitation into a charge separation. The sequence is that of Photosystem II reaction center protein J from Prochlorococcus marinus (strain NATL1A).